Consider the following 467-residue polypeptide: MDSFAAAETWTDAAGGAGADGRNLSAALAAGAAAEALGTEWLQLLVQAGNLSSSLPSSVPGLPTTSPAPSQPRANLTNQFVQPSWRIALWSLAYGVVVAVAVFGNLIVIWIILAHKRMRTVTNYFLVNLAFSDASMAAFNTLVNFIYALHSEWYFGANYCRFQNFFPITAVFASIYSMTAIAVDRYMAIIDPLKPRLSATATKIVIGSIWILAFLLALPQCLYSKTKVMPGRTLCYVQWPEGPKQHFIYHIIVIILVYCFPLLIMGITYTIVGITLWGGEIPGDTCDKYHEQLKAKRKVVKMMIIVVVTFAICWLPYHIYFILTAIYQQLNRWKYIQQVYLASFWLAMSSTMYNPIIYCCLNKRFRAGFKRAFRWCPFIQVSSYDELELKTTRFHPTRQSSLYTVTRMESMTVVFDPSDADNTRSSRKKRATPGDPNFNGCSRRNSKSASTTSSFISSPYTSMEEYS.

Residues 1–86 (MDSFAAAETW…TNQFVQPSWR (86 aa)) lie on the Extracellular side of the membrane. N-linked (GlcNAc...) asparagine glycosylation is found at Asn23, Asn50, and Asn75. A helical membrane pass occupies residues 87–109 (IALWSLAYGVVVAVAVFGNLIVI). Residues 110–119 (WIILAHKRMR) are Cytoplasmic-facing. Residues 120–141 (TVTNYFLVNLAFSDASMAAFNT) traverse the membrane as a helical segment. Topologically, residues 142–161 (LVNFIYALHSEWYFGANYCR) are extracellular. A disulfide bond links Cys160 and Cys235. A helical transmembrane segment spans residues 162–183 (FQNFFPITAVFASIYSMTAIAV). Over 184 to 203 (DRYMAIIDPLKPRLSATATK) the chain is Cytoplasmic. Residues 204-224 (IVIGSIWILAFLLALPQCLYS) traverse the membrane as a helical segment. The Extracellular segment spans residues 225–247 (KTKVMPGRTLCYVQWPEGPKQHF). Residues 248-272 (IYHIIVIILVYCFPLLIMGITYTIV) traverse the membrane as a helical segment. Over 273-301 (GITLWGGEIPGDTCDKYHEQLKAKRKVVK) the chain is Cytoplasmic. Residues 302 to 323 (MMIIVVVTFAICWLPYHIYFIL) form a helical membrane-spanning segment. Residues 324 to 336 (TAIYQQLNRWKYI) are Extracellular-facing. The helical transmembrane segment at 337 to 361 (QQVYLASFWLAMSSTMYNPIIYCCL) threads the bilayer. The Cytoplasmic segment spans residues 362-467 (NKRFRAGFKR…SPYTSMEEYS (106 aa)). Cys376 carries S-palmitoyl cysteine lipidation. A disordered region spans residues 416–467 (DPSDADNTRSSRKKRATPGDPNFNGCSRRNSKSASTTSSFISSPYTSMEEYS). Positions 447–467 (KSASTTSSFISSPYTSMEEYS) are enriched in low complexity.

It belongs to the G-protein coupled receptor 1 family.

It localises to the cell membrane. Its function is as follows. This is a receptor for the tachykinin neuropeptide neuromedin-K (neurokinin B). It is associated with G proteins that activate a phosphatidylinositol-calcium second messenger system. This is Neuromedin-K receptor (TACR3) from Oryctolagus cuniculus (Rabbit).